Reading from the N-terminus, the 310-residue chain is Glutaminase (310 aa).

Positions 66, 117, 161, 168, 192, 244, and 262 each coordinate substrate.

It belongs to the glutaminase family. As to quaternary structure, homotetramer.

The catalysed reaction is L-glutamine + H2O = L-glutamate + NH4(+). The protein is Glutaminase of Desulfovibrio desulfuricans (strain ATCC 27774 / DSM 6949 / MB).